A 486-amino-acid polypeptide reads, in one-letter code: NADH-quinone oxidoreductase subunit N (486 aa).

The next 14 membrane-spanning stretches (helical) occupy residues 8 to 28 (LTALLPLLIIMLTVITVILSI), 36 to 56 (FVAVFSILGLIFALCSLYFLI), 74 to 94 (ILYIGMILISSICTCIFSYPW), 104 to 124 (EFYLLVIISTLGAISLTISHH), 125 to 145 (MASFFINIELISLPMFGLIAY), 160 to 180 (IILSGVSSSFLLFGIAWVYSI), 201 to 221 (ILVVLFGISMILLSLFFKLSI), 239 to 259 (VLSFFSTAGKISVFSVLLNFL), 269 to 289 (VIYFILSLIIILSILVGNLMA), 298 to 318 (FLGYTSISQIGYLLIVLLVSH), 329 to 349 (AIYLCGYLFSNIACLGIVNLI), 376 to 396 (SVLTLVLISSAGIPMTLGFIG), 410 to 432 (WLIGFAFLIGSLLGLYCYLRIIL), and 459 to 479 (IVICISGIILLALGIYPNPLI).

It belongs to the complex I subunit 2 family. In terms of assembly, NDH-1 is composed of 13 different subunits. Subunits NuoA, H, J, K, L, M, N constitute the membrane sector of the complex.

It localises to the cell membrane. The catalysed reaction is a quinone + NADH + 5 H(+)(in) = a quinol + NAD(+) + 4 H(+)(out). Its function is as follows. NDH-1 shuttles electrons from NADH, via FMN and iron-sulfur (Fe-S) centers, to quinones in the respiratory chain. The immediate electron acceptor for the enzyme in this species is believed to be ubiquinone. Couples the redox reaction to proton translocation (for every two electrons transferred, four hydrogen ions are translocated across the cytoplasmic membrane), and thus conserves the redox energy in a proton gradient. This is NADH-quinone oxidoreductase subunit N from Buchnera aphidicola subsp. Acyrthosiphon pisum (strain APS) (Acyrthosiphon pisum symbiotic bacterium).